Here is a 284-residue protein sequence, read N- to C-terminus: Tryptophan 2,3-dioxygenase (284 aa).

Residues 51-55 (FIIQH), tyrosine 113, and arginine 117 contribute to the substrate site. Histidine 240 lines the heme pocket. Residue threonine 254 participates in substrate binding.

It belongs to the tryptophan 2,3-dioxygenase family. In terms of assembly, homotetramer. It depends on heme as a cofactor.

The catalysed reaction is L-tryptophan + O2 = N-formyl-L-kynurenine. The protein operates within amino-acid degradation; L-tryptophan degradation via kynurenine pathway; L-kynurenine from L-tryptophan: step 1/2. Functionally, heme-dependent dioxygenase that catalyzes the oxidative cleavage of the L-tryptophan (L-Trp) pyrrole ring and converts L-tryptophan to N-formyl-L-kynurenine. Catalyzes the oxidative cleavage of the indole moiety. This chain is Tryptophan 2,3-dioxygenase, found in Rhodococcus jostii (strain RHA1).